We begin with the raw amino-acid sequence, 495 residues long: Probable biotin-dependent acyl-coenzyme A carboxylase beta3 subunit (495 aa).

One can recognise a CoA carboxyltransferase N-terminal domain in the interval 1-236 (MSRITTDQLR…PLPAPQTPAP (236 aa)). In terms of domain architecture, CoA carboxyltransferase C-terminal spans 242–470 (TWDSVVASRR…SNAIAAEVHA (229 aa)).

The protein belongs to the AccD/PCCB family. The biotin-dependent acyl-CoA carboxylase complex is composed of an AccA protein, which contains the biotin carboxylase (BC) and biotin carboxyl carrier protein (BCCP) domains, and an AccD protein, which contains the carboxyl transferase (CT) domain.

Functionally, component of a biotin-dependent acyl-CoA carboxylase complex. This subunit transfers the CO2 from carboxybiotin to the CoA ester substrate. In Mycobacterium bovis (strain ATCC BAA-935 / AF2122/97), this protein is Probable biotin-dependent acyl-coenzyme A carboxylase beta3 subunit (accD3).